A 531-amino-acid polypeptide reads, in one-letter code: Aspartate--tRNA ligase, cytoplasmic (531 aa).

The segment at 1 to 45 (MADAAEGEQPKLSKKELNKLARKAKKDEKAGEKGGNQQQAAAMDQ) is disordered. Basic and acidic residues predominate over residues 8 to 32 (EQPKLSKKELNKLARKAKKDEKAGE). Residue E259 participates in L-aspartate binding. The tract at residues 281–284 (QLYK) is aspartate. L-aspartate is bound at residue R303. ATP is bound by residues 303–305 (RAE), 311–313 (RHM), and E454. Positions 457 and 461 each coordinate L-aspartate. 502–505 (GLER) is a binding site for ATP.

The protein belongs to the class-II aminoacyl-tRNA synthetase family. Type 2 subfamily. In terms of assembly, homodimer.

The protein resides in the cytoplasm. It catalyses the reaction tRNA(Asp) + L-aspartate + ATP = L-aspartyl-tRNA(Asp) + AMP + diphosphate. The protein is Aspartate--tRNA ligase, cytoplasmic of Caenorhabditis elegans.